Reading from the N-terminus, the 685-residue chain is uncharacterized protein (685 aa).

Disordered regions lie at residues 78-220 (AKQA…HIFD), 251-280 (TQNP…RNNE), 296-332 (DNNN…NNSE), and 459-657 (RNVK…NNKS). Positions 86–139 (KKKETENVEEEGEEKEKKIDDESFPDLLESTEKMKSELSKEKDKKKKQLKDGKK) form a coiled coil. 2 stretches are compositionally biased toward basic and acidic residues: residues 115 to 127 (STEK…SKEK) and 165 to 181 (FNDK…KKND). Positions 190 to 215 (NNQQNDMNNNNQNNQNNMNNNNNNNN) are enriched in low complexity. Over residues 263 to 276 (LTNNQGENNIPTDN) the composition is skewed to polar residues. The segment covering 297–307 (NNNNNNNNNNN) has biased composition (low complexity). Polar residues predominate over residues 308–331 (LGSAMNTPMNNMNKGGPRNNVNNS). Composition is skewed to low complexity over residues 460–474 (NVKN…GNTN) and 481–498 (NNRG…NNFN). Basic and acidic residues predominate over residues 499–515 (RRNDKNDNRNFRRKDID). A compositionally biased stretch (polar residues) spans 520–530 (WRNTANPTQEE). A compositionally biased stretch (low complexity) spans 531-590 (NNNNMNHNNNYNNNNNNNNNNNNNNNNNNNTNHGKNFRNFNNLNNMKNNNSSNNKMMGMN). The span at 591 to 602 (HMQQKGMNSSTG) shows a compositional bias: polar residues. Low complexity predominate over residues 617 to 656 (NNKMYKNNMGNANNNNNNNAVNTNFNNNNNNGNFHMNNNK).

This is an uncharacterized protein from Plasmodium falciparum (isolate 3D7).